Reading from the N-terminus, the 201-residue chain is Translation machinery-associated protein 22 (201 aa).

Residues 104 to 175 (VTVKRIERNK…EIKEFIVEKY (72 aa)) form the SUI1 domain.

The protein belongs to the DENR family. As to quaternary structure, interacts with the 40S ribosomal subunit.

It is found in the cytoplasm. The polypeptide is Translation machinery-associated protein 22 (TMA22) (Pyricularia oryzae (strain 70-15 / ATCC MYA-4617 / FGSC 8958) (Rice blast fungus)).